Here is a 228-residue protein sequence, read N- to C-terminus: DNA mismatch repair protein MutH (228 aa).

This sequence belongs to the MutH family.

It localises to the cytoplasm. Its function is as follows. Sequence-specific endonuclease that cleaves unmethylated GATC sequences. It is involved in DNA mismatch repair. In Yersinia pseudotuberculosis serotype O:1b (strain IP 31758), this protein is DNA mismatch repair protein MutH.